The chain runs to 698 residues: Auxin response factor 22 (698 aa).

The segment at residues 128–230 is a DNA-binding region (TF-B3); sequence FAKTLTQSDA…ELCVGIRRAK (103 aa). Over residues 549-577 the composition is skewed to polar residues; sequence TSSGSTETLSPGVTGNSSPNGNAHKTGNA. The interval 549-579 is disordered; it reads TSSGSTETLSPGVTGNSSPNGNAHKTGNASD. The PB1 domain maps to 603–683; sequence AGHCKVFMES…RRLTIIAGDR (81 aa).

This sequence belongs to the ARF family. As to quaternary structure, homodimers and heterodimers. In terms of tissue distribution, expressed in roots, culms, leaves and young panicles.

It localises to the nucleus. Its function is as follows. Auxin response factors (ARFs) are transcriptional factors that bind specifically to the DNA sequence 5'-TGTCTC-3' found in the auxin-responsive promoter elements (AuxREs). The protein is Auxin response factor 22 (ARF22) of Oryza sativa subsp. japonica (Rice).